A 94-amino-acid chain; its full sequence is Large ribosomal subunit protein uL23 (94 aa).

It belongs to the universal ribosomal protein uL23 family. Part of the 50S ribosomal subunit. Contacts protein L29, and trigger factor when it is bound to the ribosome.

One of the early assembly proteins it binds 23S rRNA. One of the proteins that surrounds the polypeptide exit tunnel on the outside of the ribosome. Forms the main docking site for trigger factor binding to the ribosome. This Akkermansia muciniphila (strain ATCC BAA-835 / DSM 22959 / JCM 33894 / BCRC 81048 / CCUG 64013 / CIP 107961 / Muc) protein is Large ribosomal subunit protein uL23.